The chain runs to 145 residues: Ponticulin-like protein B (145 aa).

The signal sequence occupies residues 1-22; sequence MLFIKSLLLLLSLIFAVSNATG. N-linked (GlcNAc...) asparagine glycosylation occurs at asparagine 34. The disordered stretch occupies residues 107 to 126; that stretch reads DTTSSSTSPSSTSPSSTSPA. Positions 108 to 126 are enriched in low complexity; it reads TTSSSTSPSSTSPSSTSPA. Residue serine 117 is the site of GPI-like-anchor amidated serine attachment. Residues 118–145 constitute a propeptide, removed in mature form; it reads TSPSSTSPASTLIGSIAFVTLAALFALI.

It belongs to the ponticulin family. Post-translationally, the GPI-like-anchor contains a phosphoceramide group, rather than a phosphatidyl group.

Its subcellular location is the cell membrane. Functionally, binds F-actin and nucleates actin assembly. The protein is Ponticulin-like protein B (ponB) of Dictyostelium discoideum (Social amoeba).